A 265-amino-acid polypeptide reads, in one-letter code: Beta-lactamase SHV-4 (265 aa).

Catalysis depends on Ser45, which acts as the Acyl-ester intermediate. A disulfide bond links Cys52 and Cys98. Catalysis depends on Glu143, which acts as the Proton acceptor. Position 209-211 (209-211 (KTG)) interacts with substrate.

It belongs to the class-A beta-lactamase family.

It carries out the reaction a beta-lactam + H2O = a substituted beta-amino acid. In terms of biological role, SHV enzymes hydrolyze broad spectrum cephalosporins notably cefotaxime and ceftazidime. SHV-4 causes particularly high levels of resistance to aztreonam and ceftazidime. The polypeptide is Beta-lactamase SHV-4 (bla) (Klebsiella pneumoniae).